The following is a 204-amino-acid chain: uncharacterized protein (204 aa).

Residues 63–83 (SLLLSMVASVTAAGGNAAIVG) traverse the membrane as a helical segment.

It is found in the membrane. This is an uncharacterized protein from Mycobacterium tuberculosis (strain ATCC 25618 / H37Rv).